A 205-amino-acid polypeptide reads, in one-letter code: Thymidine kinase (205 aa).

Residues 9–16 (SAMNAGKT) and 88–91 (DECH) contribute to the ATP site. Residue glutamate 89 is the Proton acceptor of the active site. Zn(2+) is bound by residues cysteine 146, cysteine 148, cysteine 183, and histidine 186.

It belongs to the thymidine kinase family. Homotetramer.

It localises to the cytoplasm. The enzyme catalyses thymidine + ATP = dTMP + ADP + H(+). This is Thymidine kinase from Blochmanniella pennsylvanica (strain BPEN).